The primary structure comprises 100 residues: Small ribosomal subunit protein uS14 (100 aa).

This sequence belongs to the universal ribosomal protein uS14 family. As to quaternary structure, part of the 30S ribosomal subunit. Contacts proteins S3 and S10.

Functionally, binds 16S rRNA, required for the assembly of 30S particles and may also be responsible for determining the conformation of the 16S rRNA at the A site. This chain is Small ribosomal subunit protein uS14, found in Prochlorococcus marinus (strain AS9601).